The following is a 150-amino-acid chain: Ribosome maturation factor RimP (150 aa).

Belongs to the RimP family.

Its subcellular location is the cytoplasm. In terms of biological role, required for maturation of 30S ribosomal subunits. This Escherichia coli O9:H4 (strain HS) protein is Ribosome maturation factor RimP.